The chain runs to 385 residues: tRNA-specific 2-thiouridylase MnmA (385 aa).

ATP is bound by residues 29 to 36 (GLSGGVDS) and L55. C116 acts as the Nucleophile in catalysis. A disulfide bridge connects residues C116 and C225. G141 provides a ligand contact to ATP. The interaction with tRNA stretch occupies residues 175-177 (KDQ). The Cysteine persulfide intermediate role is filled by C225. The segment at 330–331 (RY) is interaction with tRNA.

Belongs to the MnmA/TRMU family.

It localises to the cytoplasm. It catalyses the reaction S-sulfanyl-L-cysteinyl-[protein] + uridine(34) in tRNA + AH2 + ATP = 2-thiouridine(34) in tRNA + L-cysteinyl-[protein] + A + AMP + diphosphate + H(+). Its function is as follows. Catalyzes the 2-thiolation of uridine at the wobble position (U34) of tRNA, leading to the formation of s(2)U34. This chain is tRNA-specific 2-thiouridylase MnmA, found in Prochlorococcus marinus (strain MIT 9301).